Consider the following 165-residue polypeptide: Xanthine-guanine phosphoribosyltransferase (165 aa).

5-phospho-alpha-D-ribose 1-diphosphate-binding positions include 41–42 and 98–106; these read RG and DDLTDTGKT. Asp-99 provides a ligand contact to Mg(2+). Positions 102 and 145 each coordinate guanine. Xanthine-binding residues include Asp-102 and Ile-145. GMP-binding positions include 102–106 and 144–145; these read DTGKT and WI.

The protein belongs to the purine/pyrimidine phosphoribosyltransferase family. XGPT subfamily. Homotetramer. Requires Mg(2+) as cofactor.

Its subcellular location is the cell inner membrane. It carries out the reaction GMP + diphosphate = guanine + 5-phospho-alpha-D-ribose 1-diphosphate. It catalyses the reaction XMP + diphosphate = xanthine + 5-phospho-alpha-D-ribose 1-diphosphate. The catalysed reaction is IMP + diphosphate = hypoxanthine + 5-phospho-alpha-D-ribose 1-diphosphate. Its pathway is purine metabolism; GMP biosynthesis via salvage pathway; GMP from guanine: step 1/1. The protein operates within purine metabolism; XMP biosynthesis via salvage pathway; XMP from xanthine: step 1/1. Purine salvage pathway enzyme that catalyzes the transfer of the ribosyl-5-phosphate group from 5-phospho-alpha-D-ribose 1-diphosphate (PRPP) to the N9 position of the 6-oxopurines guanine and xanthine to form the corresponding ribonucleotides GMP (guanosine 5'-monophosphate) and XMP (xanthosine 5'-monophosphate), with the release of PPi. To a lesser extent, also acts on hypoxanthine. The sequence is that of Xanthine-guanine phosphoribosyltransferase from Brucella suis (strain ATCC 23445 / NCTC 10510).